The following is a 455-amino-acid chain: La-related protein 6C (455 aa).

Basic and acidic residues predominate over residues M1–D20. The segment at M1–Q29 is disordered. The region spanning N138–D229 is the HTH La-type RNA-binding domain. Residues R236–R324 enclose the RRM domain. Disordered regions lie at residues S348 to G396 and S414 to L455.

Its subcellular location is the nucleus. Functionally, transcriptional regulator. In Arabidopsis thaliana (Mouse-ear cress), this protein is La-related protein 6C (LARP6C).